The sequence spans 384 residues: Acetylgalactosaminyl-O-glycosyl-glycoprotein beta-1,3-N-acetylglucosaminyltransferase (384 aa).

The Cytoplasmic segment spans residues 1–12 (MAFPCRRSLTAK). Residues 13 to 31 (TLACLLVGVSFLALQQWFL) traverse the membrane as a helical; Signal-anchor for type II membrane protein segment. The Lumenal segment spans residues 32 to 384 (QAPRSPREER…LSCDRGHRVS (353 aa)). A disordered region spans residues 34 to 68 (PRSPREERSPQEETPEGPTDAPAADEPPSELVPGP). Asn-73, Asn-77, and Asn-196 each carry an N-linked (GlcNAc...) asparagine glycan.

It belongs to the glycosyltransferase 31 family. Present in stomach and colon (at protein level). Restricted in the stomach, colon and small intestine, where core 3 structure is present.

It is found in the golgi apparatus membrane. The catalysed reaction is a 3-O-[N-acetyl-alpha-D-galactosaminyl]-L-threonyl-[protein] + UDP-N-acetyl-alpha-D-glucosamine = a 3-O-[N-acetyl-beta-D-glucosaminyl-(1-&gt;3)-N-acetyl-alpha-D-galactosaminyl]-L-threonyl-[protein] + UDP + H(+). It catalyses the reaction a 3-O-[N-acetyl-alpha-D-galactosaminyl]-L-seryl-[protein] + UDP-N-acetyl-alpha-D-glucosamine = 3-O-[N-acetyl-beta-D-glucosaminyl-(1-&gt;3)-N-acetyl-alpha-D-galactosaminyl]-L-seryl-[protein] + UDP + H(+). It participates in protein modification; protein glycosylation. Its function is as follows. Beta-1,3-N-acetylglucosaminyltransferase that synthesizes the core 3 structure of the O-glycan, an important precursor in the biosynthesis of mucin-type glycoproteins. Plays an important role in the synthesis of mucin-type O-glycans in digestive organs. The sequence is that of Acetylgalactosaminyl-O-glycosyl-glycoprotein beta-1,3-N-acetylglucosaminyltransferase (B3GNT6) from Homo sapiens (Human).